Reading from the N-terminus, the 975-residue chain is Exocyst complex component 4 (975 aa).

N-acetylalanine is present on alanine 2. The residue at position 9 (lysine 9) is an N6-acetyllysine. At serine 32 the chain carries Phosphoserine. Residues 32–114 (STSDDVEDRE…HCKRDELRKL (83 aa)) adopt a coiled-coil conformation. Residues 211 to 224 (RNKEKGKMSSHGKD) are compositionally biased toward basic and acidic residues. The interval 211-230 (RNKEKGKMSSHGKDPSPGPL) is disordered. Serine 226 bears the Phosphoserine mark. Threonine 238 carries the post-translational modification Phosphothreonine. The residue at position 469 (serine 469) is a Phosphoserine.

Belongs to the SEC8 family. As to quaternary structure, the exocyst complex is composed of EXOC1, EXOC2, EXOC3, EXOC4, EXOC5, EXOC6, EXOC7 and EXOC8. Interacts with BIRC6/bruce. Interacts with MYRIP. Interacts with SH3BP1; required for the localization of both SH3BP1 and the exocyst to the leading edge of migrating cells. Interacts with SLC6A9. Expressed in the striatum (at protein level).

The protein resides in the midbody. It is found in the midbody ring. The protein localises to the cell projection. It localises to the cytoplasm. Its subcellular location is the cytoskeleton. The protein resides in the microtubule organizing center. It is found in the centrosome. Component of the exocyst complex involved in the docking of exocytic vesicles with fusion sites on the plasma membrane. The protein is Exocyst complex component 4 (Exoc4) of Mus musculus (Mouse).